The sequence spans 137 residues: ATP synthase epsilon chain (137 aa).

The protein belongs to the ATPase epsilon chain family. As to quaternary structure, F-type ATPases have 2 components, CF(1) - the catalytic core - and CF(0) - the membrane proton channel. CF(1) has five subunits: alpha(3), beta(3), gamma(1), delta(1), epsilon(1). CF(0) has three main subunits: a, b and c.

The protein resides in the cell inner membrane. Functionally, produces ATP from ADP in the presence of a proton gradient across the membrane. The protein is ATP synthase epsilon chain of Pseudoalteromonas atlantica (strain T6c / ATCC BAA-1087).